A 444-amino-acid polypeptide reads, in one-letter code: Probable glycine dehydrogenase (decarboxylating) subunit 1 (444 aa).

Belongs to the GcvP family. N-terminal subunit subfamily. As to quaternary structure, the glycine cleavage system is composed of four proteins: P, T, L and H. In this organism, the P 'protein' is a heterodimer of two subunits.

The enzyme catalyses N(6)-[(R)-lipoyl]-L-lysyl-[glycine-cleavage complex H protein] + glycine + H(+) = N(6)-[(R)-S(8)-aminomethyldihydrolipoyl]-L-lysyl-[glycine-cleavage complex H protein] + CO2. Functionally, the glycine cleavage system catalyzes the degradation of glycine. The P protein binds the alpha-amino group of glycine through its pyridoxal phosphate cofactor; CO(2) is released and the remaining methylamine moiety is then transferred to the lipoamide cofactor of the H protein. The protein is Probable glycine dehydrogenase (decarboxylating) subunit 1 of Chlorobaculum parvum (strain DSM 263 / NCIMB 8327) (Chlorobium vibrioforme subsp. thiosulfatophilum).